The sequence spans 378 residues: Branched-chain-amino-acid aminotransferase (378 aa).

The residue at position 213 (Lys213) is an N6-(pyridoxal phosphate)lysine.

It belongs to the class-IV pyridoxal-phosphate-dependent aminotransferase family. Homodimer. Pyridoxal 5'-phosphate is required as a cofactor.

The catalysed reaction is L-leucine + 2-oxoglutarate = 4-methyl-2-oxopentanoate + L-glutamate. It catalyses the reaction L-isoleucine + 2-oxoglutarate = (S)-3-methyl-2-oxopentanoate + L-glutamate. It carries out the reaction L-valine + 2-oxoglutarate = 3-methyl-2-oxobutanoate + L-glutamate. Its function is as follows. Catalyzes the first reaction in the catabolism of the essential branched chain amino acids leucine, isoleucine, and valine. The polypeptide is Branched-chain-amino-acid aminotransferase (bcaA) (Dictyostelium discoideum (Social amoeba)).